We begin with the raw amino-acid sequence, 57 residues long: RPGFCELPAAKGLCKAHKPAFYYNKDSHRCQKFIYGGCGGNANRFRTIDECNRTCVG.

Positions 5–55 (CELPAAKGLCKAHKPAFYYNKDSHRCQKFIYGGCGGNANRFRTIDECNRTC) constitute a BPTI/Kunitz inhibitor domain. 3 disulfides stabilise this stretch: cysteine 5-cysteine 55, cysteine 14-cysteine 38, and cysteine 30-cysteine 51.

The protein belongs to the venom Kunitz-type family. In terms of tissue distribution, expressed by the venom gland.

The protein resides in the secreted. Functionally, serine protease inhibitor that inhibits trypsin (Ki=0.0035 nM). The protein is Kunitz-type serine protease inhibitor of Naja naja (Indian cobra).